The sequence spans 639 residues: Wall-associated receptor kinase-like 15 (639 aa).

The signal sequence occupies residues 1 to 25 (MELPWLSLTTFTLSLLIYFSSTTQA). Residues 26-282 (FKRCPNCGST…KRKSCKRWSN (257 aa)) are Extracellular-facing. N-linked (GlcNAc...) asparagine glycosylation is found at Asn68, Asn115, Asn126, Asn141, and Asn241. A helical membrane pass occupies residues 283-303 (LPLLGGLAGGVGAILIAGFIT). Over 304-639 (KTIVSKQNRR…KEIENILHGI (336 aa)) the chain is Cytoplasmic. In terms of domain architecture, Protein kinase spans 354 to 639 (FAKSNLLGFG…KEIENILHGI (286 aa)). ATP contacts are provided by residues 360–368 (LGFGGFGEV) and Lys382. The Proton acceptor role is filled by Asp484.

Belongs to the protein kinase superfamily. Ser/Thr protein kinase family.

The protein resides in the membrane. It catalyses the reaction L-seryl-[protein] + ATP = O-phospho-L-seryl-[protein] + ADP + H(+). The catalysed reaction is L-threonyl-[protein] + ATP = O-phospho-L-threonyl-[protein] + ADP + H(+). In terms of biological role, putative serine/threonine-protein kinase that may function as a signaling receptor of extracellular matrix component. The polypeptide is Wall-associated receptor kinase-like 15 (WAKL15) (Arabidopsis thaliana (Mouse-ear cress)).